We begin with the raw amino-acid sequence, 89 residues long: Small ribosomal subunit protein uS17 (89 aa).

Belongs to the universal ribosomal protein uS17 family. As to quaternary structure, part of the 30S ribosomal subunit.

One of the primary rRNA binding proteins, it binds specifically to the 5'-end of 16S ribosomal RNA. In Albidiferax ferrireducens (strain ATCC BAA-621 / DSM 15236 / T118) (Rhodoferax ferrireducens), this protein is Small ribosomal subunit protein uS17.